Consider the following 453-residue polypeptide: Allantoinase (453 aa).

Residues histidine 59, histidine 61, lysine 146, histidine 186, histidine 242, and aspartate 315 each coordinate Zn(2+). N6-carboxylysine is present on lysine 146.

Belongs to the metallo-dependent hydrolases superfamily. Allantoinase family. As to quaternary structure, homotetramer. Requires Zn(2+) as cofactor. In terms of processing, carboxylation allows a single lysine to coordinate two zinc ions.

It carries out the reaction (S)-allantoin + H2O = allantoate + H(+). The protein operates within nitrogen metabolism; (S)-allantoin degradation; allantoate from (S)-allantoin: step 1/1. Its function is as follows. Catalyzes the conversion of allantoin (5-ureidohydantoin) to allantoic acid by hydrolytic cleavage of the five-member hydantoin ring. The polypeptide is Allantoinase (Escherichia coli (strain 55989 / EAEC)).